We begin with the raw amino-acid sequence, 873 residues long: Alanine--tRNA ligase (873 aa).

Residues histidine 563, histidine 567, cysteine 664, and histidine 668 each contribute to the Zn(2+) site.

The protein belongs to the class-II aminoacyl-tRNA synthetase family. The cofactor is Zn(2+).

The protein resides in the cytoplasm. It catalyses the reaction tRNA(Ala) + L-alanine + ATP = L-alanyl-tRNA(Ala) + AMP + diphosphate. Catalyzes the attachment of alanine to tRNA(Ala) in a two-step reaction: alanine is first activated by ATP to form Ala-AMP and then transferred to the acceptor end of tRNA(Ala). Also edits incorrectly charged Ser-tRNA(Ala) and Gly-tRNA(Ala) via its editing domain. The protein is Alanine--tRNA ligase of Aromatoleum aromaticum (strain DSM 19018 / LMG 30748 / EbN1) (Azoarcus sp. (strain EbN1)).